A 317-amino-acid polypeptide reads, in one-letter code: Melanocyte-stimulating hormone receptor (317 aa).

Topologically, residues 1–37 are extracellular; sequence MPMQGAQRRLLGSLNSTPTATPNLGLAANHTGAPCLE. Residue Asn-29 is glycosylated (N-linked (GlcNAc...) asparagine). The chain crosses the membrane as a helical span at residues 38–63; sequence VSIPDGLFLSLGLVSLVENVLVVAAI. The Cytoplasmic segment spans residues 64–72; sequence AKNRNLHSP. The chain crosses the membrane as a helical span at residues 73–93; it reads MYCFICCLALSDLLVSGSNML. At 94 to 118 the chain is on the extracellular side; it reads EMAVILLLEAGALATRASVVQQLQN. The chain crosses the membrane as a helical span at residues 119 to 140; sequence TIDVLTCSSMLCSLCFLGAIAV. Residues 141–163 are Cytoplasmic-facing; the sequence is DRYVSIFYALRYHSIVTLPRARR. A helical transmembrane segment spans residues 164–183; that stretch reads AIAAIWVASVLSSTLFIAYC. Topologically, residues 184-191 are extracellular; it reads DHAAVLLC. The chain crosses the membrane as a helical span at residues 192-211; it reads LVVFFLAMLVLMAVLYVHML. Residues 212–240 lie on the Cytoplasmic side of the membrane; that stretch reads ARACQHAQGITRLHKRQLPAHQGFGLRGA. The helical transmembrane segment at 241–266 threads the bilayer; that stretch reads ATLTILLGIFFVCWGPFFLHLMLVVL. At 267-279 the chain is on the extracellular side; it reads CPQHLTCSCIFKN. Residues 280 to 300 form a helical membrane-spanning segment; that stretch reads FKVFLTLIICNTIIDPLIYAF. Residues 301 to 317 lie on the Cytoplasmic side of the membrane; that stretch reads RSQELCRTLKEVLLCSW. Cys-315 carries S-palmitoyl cysteine lipidation.

It belongs to the G-protein coupled receptor 1 family. Interacts with MGRN1, but does not undergo MGRN1-mediated ubiquitination; this interaction competes with GNAS-binding and thus inhibits agonist-induced cAMP production. Interacts with OPN3; the interaction results in a decrease in MC1R-mediated cAMP signaling and ultimately a decrease in melanin production in melanocytes.

The protein resides in the cell membrane. In terms of biological role, receptor for MSH (alpha, beta and gamma) and ACTH. The activity of this receptor is mediated by G proteins which activate adenylate cyclase. Mediates melanogenesis, the production of eumelanin (black/brown) and phaeomelanin (red/yellow), via regulation of cAMP signaling in melanocytes. This chain is Melanocyte-stimulating hormone receptor (MC1R), found in Alouatta sara (Bolivian red howler monkey).